We begin with the raw amino-acid sequence, 137 residues long: Protein MGF 110-7L (137 aa).

A signal peptide spans 1–20; the sequence is MLVIILGVIGLLASSNLVSS. N-linked (GlcNAc...) asparagine; by host glycans are attached at residues N69, N70, and N105.

It belongs to the asfivirus MGF 110 family.

Plays a role in virus cell tropism, and may be required for efficient virus replication in macrophages. The chain is Protein MGF 110-7L from African swine fever virus (isolate Pig/Kenya/KEN-50/1950) (ASFV).